A 160-amino-acid polypeptide reads, in one-letter code: Phosphopantetheine adenylyltransferase (160 aa).

Position 8 (serine 8) interacts with substrate. ATP-binding positions include 8–9 and histidine 16; that span reads SF. The substrate site is built by lysine 40, leucine 73, and lysine 87. Residues 88 to 90, glutamate 98, and 122 to 128 contribute to the ATP site; these read GLR and YGYVSST.

Belongs to the bacterial CoaD family. As to quaternary structure, homohexamer. It depends on Mg(2+) as a cofactor.

The protein resides in the cytoplasm. The catalysed reaction is (R)-4'-phosphopantetheine + ATP + H(+) = 3'-dephospho-CoA + diphosphate. It participates in cofactor biosynthesis; coenzyme A biosynthesis; CoA from (R)-pantothenate: step 4/5. Reversibly transfers an adenylyl group from ATP to 4'-phosphopantetheine, yielding dephospho-CoA (dPCoA) and pyrophosphate. This Corynebacterium glutamicum (strain R) protein is Phosphopantetheine adenylyltransferase.